Here is a 507-residue protein sequence, read N- to C-terminus: Maturase K (507 aa).

Belongs to the intron maturase 2 family. MatK subfamily.

It localises to the plastid. The protein localises to the chloroplast. Its function is as follows. Usually encoded in the trnK tRNA gene intron. Probably assists in splicing its own and other chloroplast group II introns. This Liriodendron chinense (Chinese tulip tree) protein is Maturase K.